The primary structure comprises 336 residues: Aromatic prenyltransferase (336 aa).

Belongs to the aromatic prenyltransferase family.

In terms of biological role, prenyltransferase that attaches isoprenoid moieties to carbon atoms of aromatic substrates in an enzyme-catalyzed Friedel-Crafts reaction. Shows specificity for dimethylallyl diphosphate (DMAPP) and does not accept geranyl diphosphate (GPP) or isopentenyl diphosphate (IPP). Prenylates the artificial substrate 2,7-dihydroxynaphthalene (2,7-DHN), as well as dihydrophenazine-1-carboxylic acid at a lower level. Only traces of products are detected with aspulvinone E, flaviolin, or 4-hydroxybenzoic acid as substrates; and no product is formed with L-tryptophan, L-tyrosine, or 4-hydroxyphenylpyruvate. Ptf seems no to be involved in the prenylation reaction in the biosynthesis of aspulvinone H and J and the physiological function of ptf remains unknown. The polypeptide is Aromatic prenyltransferase (Aspergillus terreus (strain NIH 2624 / FGSC A1156)).